The chain runs to 312 residues: Methionyl-tRNA formyltransferase (312 aa).

(6S)-5,6,7,8-tetrahydrofolate is bound at residue 109–112 (SLLP).

The protein belongs to the Fmt family.

It carries out the reaction L-methionyl-tRNA(fMet) + (6R)-10-formyltetrahydrofolate = N-formyl-L-methionyl-tRNA(fMet) + (6S)-5,6,7,8-tetrahydrofolate + H(+). Its function is as follows. Attaches a formyl group to the free amino group of methionyl-tRNA(fMet). The formyl group appears to play a dual role in the initiator identity of N-formylmethionyl-tRNA by promoting its recognition by IF2 and preventing the misappropriation of this tRNA by the elongation apparatus. The polypeptide is Methionyl-tRNA formyltransferase (Listeria welshimeri serovar 6b (strain ATCC 35897 / DSM 20650 / CCUG 15529 / CIP 8149 / NCTC 11857 / SLCC 5334 / V8)).